The primary structure comprises 154 residues: uncharacterized protein (154 aa).

A run of 5 helical transmembrane segments spans residues 5–24 (TLII…GVLL), 29–48 (FYAA…IYAA), 53–75 (PVVV…AIAA), 87–109 (IFWV…SMAV), and 124–146 (ATDY…LSAI).

The protein resides in the cell membrane. This is an uncharacterized protein from Archaeoglobus fulgidus (strain ATCC 49558 / DSM 4304 / JCM 9628 / NBRC 100126 / VC-16).